The following is a 125-amino-acid chain: MARIAGVDLPSNKRIVIGLTYIFGIGKTSSQNILKKAGIDESIRVKDLSDEHEAAIRRVIEESYQVEGDLRSEVNLNIKRLMDVGCYRGFRHRRGLPVNGQRTRTNARTRKGVKKTVANKKKATK.

Residues 95–125 (GLPVNGQRTRTNARTRKGVKKTVANKKKATK) are disordered. The span at 105–125 (TNARTRKGVKKTVANKKKATK) shows a compositional bias: basic residues.

The protein belongs to the universal ribosomal protein uS13 family. As to quaternary structure, part of the 30S ribosomal subunit. Forms a loose heterodimer with protein S19. Forms two bridges to the 50S subunit in the 70S ribosome.

Its function is as follows. Located at the top of the head of the 30S subunit, it contacts several helices of the 16S rRNA. In the 70S ribosome it contacts the 23S rRNA (bridge B1a) and protein L5 of the 50S subunit (bridge B1b), connecting the 2 subunits; these bridges are implicated in subunit movement. Contacts the tRNAs in the A and P-sites. The sequence is that of Small ribosomal subunit protein uS13 from Leptospira biflexa serovar Patoc (strain Patoc 1 / Ames).